The sequence spans 123 residues: Galanin peptides (123 aa).

A signal peptide spans 1 to 19; that stretch reads MARGSALLLASLLLAAALS. Residues 20 to 30 constitute a propeptide that is removed on maturation; the sequence is ASAGLWSPAKE. The disordered stretch occupies residues 46-80; it reads HAVGNHRSFSDKNGLTSKRELRPEDDMKPGSFDRS. The span at 62 to 73 shows a compositional bias: basic and acidic residues; the sequence is SKRELRPEDDMK. Serine 116 and serine 117 each carry phosphoserine.

The protein belongs to the galanin family.

The protein resides in the secreted. Its function is as follows. Endocrine hormone of the central and peripheral nervous systems that binds and activates the G protein-coupled receptors GALR1, GALR2, and GALR3. This small neuropeptide may regulate diverse physiologic functions including contraction of smooth muscle of the gastrointestinal and genitourinary tract, growth hormone and insulin release and adrenal secretion. In Homo sapiens (Human), this protein is Galanin peptides (GAL).